We begin with the raw amino-acid sequence, 504 residues long: Sucrose phosphorylase (504 aa).

D50 is a substrate binding site. Residues H88, 190 to 192 (RLD), E232, 289 to 290 (HD), 342 to 345 (DLYQ), and R399 each bind sucrose. D192 functions as the Nucleophile in the catalytic mechanism. Residue E232 is the Proton donor of the active site.

Belongs to the glycosyl hydrolase 13 family. Sucrose phosphorylase subfamily. In terms of assembly, homodimer.

The enzyme catalyses sucrose + phosphate = D-fructose + alpha-D-glucose 1-phosphate. Catalyzes the reversible phosphorolysis of sucrose into alpha-D-glucose 1-phosphate (Glc1P) and D-fructose. Is involved in sucrose degradation. Also displays transglucosylation activity in vitro, by transferring the glucosyl moiety of Glc1P to a broad range of monomeric sugars, such as D- and L-arabinose, D- and L-arabitol, and xylitol. This is Sucrose phosphorylase from Bifidobacterium adolescentis (strain ATCC 15703 / DSM 20083 / NCTC 11814 / E194a).